Consider the following 757-residue polypeptide: Dapper homolog 2 (757 aa).

An inhibition of Nodal signaling region spans residues 1 to 281 (MWAPSGQGPA…QSPLFALPKE (281 aa)). The stretch at 55–107 (RGQELRLEAALTALREQLSRLRRQDAGLKTHLDQLDQQISELQLDVSRSSCEA) forms a coiled coil. 3 disordered regions span residues 486–540 (RRRV…CSES), 584–684 (RWQS…EGCF), and 696–728 (AEAG…PPVP). 2 stretches are compositionally biased toward basic and acidic residues: residues 505-516 (ERQRVTERDPSR) and 631-644 (ACAR…EHSA). Residues 645 to 656 (DCTSLYHSTIAE) are compositionally biased toward polar residues. The segment covering 664 to 673 (SDHTANRFGD) has biased composition (basic and acidic residues). The PDZ-binding motif lies at 754–757 (MTMV).

This sequence belongs to the dapper family. In terms of assembly, can form homodimers and heterodimers with DACT1 or DACT3. Interacts with CSNK1D, PKA catalytic subunit, PKC-type kinase, CSNK2B, DVL1, DVL2, DVL3, VANGL1, VANGL2, TGFBR1, CTNNB1, CTNND2, CTNND1, LEF1, TCF7, TCF7L1 and HDAC1. In terms of tissue distribution, expressed in kidney (inner medullary collecting duct). Expressed in epidermal keratinocytes and hair follicles.

Involved in regulation of intracellular signaling pathways during development. Negatively regulates the Nodal signaling pathway, possibly by promoting the lysosomal degradation of Nodal receptors, such as TGFBR1. May be involved in control of the morphogenetic behavior of kidney ureteric bud cells by keeping cells epithelial and restraining their mesenchymal character. May play an inhibitory role in the re-epithelialization of skin wounds by attenuating TGF-beta signaling. The protein is Dapper homolog 2 (Dact2) of Mus musculus (Mouse).